The primary structure comprises 478 residues: MVIPSLPLSRWLSPLRRYFRHELLPLLADLRLAIGLFLAIALLSAVGTVIEQEETVAFYQAHYPEHPALFGFLTWRLILKLGLDHVYRTSWFLALLILFGSSLAACSLTRQWPMLKVARRWSYLTRPHSFQRLPFWTYLPQRSLQGLPQRLRQRGYAVFQDGSRLYARKGLIGRFGPILVHVSLLLILLGAIWGSLAGFKAQALIPSGSVAAIEQVTGAGDLAHLPTWQIRVNRFWIDYAPDGRVKQFYSDLSILDGGQEVKRQTISVNHPLSYRGVTLYQADWSIDSIRIRLNNSPPFQIPVVPVPTQAGSKLWGAFVPTRPDLSEGLTLLLPDLQGTALLYDTQGQWIGSLRQGMSLALDEVAPQRFPNRLTLHLDEVIGATGLQIKSDPGIPLVYLGFGLLMLGVAMSYFSYSQVWALETEAGLYLGGKTNRALVSFEREFARLVEQQLLSSPPSPAKEPPPAARVGGTESLANG.

The next 3 membrane-spanning stretches (helical) occupy residues Leu-30–Ile-50, Thr-89–Thr-109, and Phe-175–Ser-195. The tract at residues Leu-453–Gly-478 is disordered. The segment covering Pro-456 to Ala-466 has biased composition (pro residues).

Belongs to the Ccs1/CcsB family. May interact with CcsA.

It localises to the cellular thylakoid membrane. In terms of biological role, required during biogenesis of c-type cytochromes (cytochrome c6 and cytochrome f) at the step of heme attachment. The chain is Cytochrome c biogenesis protein CcsB from Synechococcus sp. (strain JA-3-3Ab) (Cyanobacteria bacterium Yellowstone A-Prime).